We begin with the raw amino-acid sequence, 113 residues long: uncharacterized protein (113 aa).

Disordered stretches follow at residues 1-22 (MGEH…PLAQ) and 90-113 (DGRH…SDDL). The segment covering 90 to 99 (DGRHTTESSF) has biased composition (basic and acidic residues). Residues 100–113 (EHSSPSRSPQSDDL) show a composition bias toward low complexity.

This is an uncharacterized protein from Mycobacterium tuberculosis (strain CDC 1551 / Oshkosh).